Reading from the N-terminus, the 377-residue chain is RIB43A-like with coiled-coils protein 2 (377 aa).

Residues 217–246 (NKNQVVELTERKRQEKQQEQEDNMTEITNL) are a coiled coil. A disordered region spans residues 354–377 (KQMNTASSSQPTEDYFSQFNTRSR).

The protein belongs to the RIB43A family. As to quaternary structure, microtubule inner protein component of sperm flagellar doublet microtubules.

The protein localises to the cytoplasm. It is found in the cytoskeleton. The protein resides in the cilium axoneme. It localises to the flagellum axoneme. In terms of biological role, microtubule inner protein (MIP) part of the dynein-decorated doublet microtubules (DMTs) in cilia axoneme, which is required for motile cilia beating. In Mus musculus (Mouse), this protein is RIB43A-like with coiled-coils protein 2.